Consider the following 500-residue polypeptide: Abscisic acid 8'-hydroxylase 3 (500 aa).

A helical membrane pass occupies residues 3–23 (ASFVIVIVISFFISLAFMCYV). Cys-426 is a binding site for heme.

This sequence belongs to the cytochrome P450 family. The cofactor is heme.

Its subcellular location is the membrane. The enzyme catalyses 2-cis-(+)-abscisate + reduced [NADPH--hemoprotein reductase] + O2 = (+)-8'-hydroxyabscisate + oxidized [NADPH--hemoprotein reductase] + H2O + H(+). It participates in plant hormone degradation; abscisic acid degradation. Functionally, involved in the oxidative degradation of abscisic acid. This chain is Abscisic acid 8'-hydroxylase 3 (CYP707A7), found in Oryza sativa subsp. indica (Rice).